A 159-amino-acid polypeptide reads, in one-letter code: UPF0262 protein CCNA_02430 (159 aa).

This sequence belongs to the UPF0262 family.

The sequence is that of UPF0262 protein CCNA_02430 from Caulobacter vibrioides (strain NA1000 / CB15N) (Caulobacter crescentus).